Reading from the N-terminus, the 241-residue chain is Probable 2-phosphosulfolactate phosphatase (241 aa).

The protein belongs to the ComB family. It depends on Mg(2+) as a cofactor.

It carries out the reaction (2R)-O-phospho-3-sulfolactate + H2O = (2R)-3-sulfolactate + phosphate. This chain is Probable 2-phosphosulfolactate phosphatase, found in Deinococcus geothermalis (strain DSM 11300 / CIP 105573 / AG-3a).